Consider the following 212-residue polypeptide: Ribosomal RNA small subunit methyltransferase G (212 aa).

Residues Gly-80, Leu-85, 131–132, and Arg-146 contribute to the S-adenosyl-L-methionine site; that span reads AE.

It belongs to the methyltransferase superfamily. RNA methyltransferase RsmG family.

It localises to the cytoplasm. It catalyses the reaction guanosine(527) in 16S rRNA + S-adenosyl-L-methionine = N(7)-methylguanosine(527) in 16S rRNA + S-adenosyl-L-homocysteine. Functionally, specifically methylates the N7 position of guanine in position 527 of 16S rRNA. The chain is Ribosomal RNA small subunit methyltransferase G from Stenotrophomonas maltophilia (strain R551-3).